Reading from the N-terminus, the 127-residue chain is Ribosome-binding factor A (127 aa).

This sequence belongs to the RbfA family. Monomer. Binds 30S ribosomal subunits, but not 50S ribosomal subunits or 70S ribosomes.

It is found in the cytoplasm. One of several proteins that assist in the late maturation steps of the functional core of the 30S ribosomal subunit. Associates with free 30S ribosomal subunits (but not with 30S subunits that are part of 70S ribosomes or polysomes). Required for efficient processing of 16S rRNA. May interact with the 5'-terminal helix region of 16S rRNA. The sequence is that of Ribosome-binding factor A from Rickettsia typhi (strain ATCC VR-144 / Wilmington).